Here is a 1331-residue protein sequence, read N- to C-terminus: ABC multidrug transporter MDR2 (1331 aa).

The tract at residues 1–50 (MVEPSEKPNTQNDDVSKQEIRNPVSSSSSTSDKEKVAKKGNSDATKSLTP) is disordered. Residues 31–41 (SDKEKVAKKGN) show a composition bias toward basic and acidic residues. 4 consecutive transmembrane segments (helical) span residues 93–113 (MILL…LPLF), 147–167 (YFVY…VGFI), 219–239 (KVGL…IGYV), and 242–262 (WKLA…MGGI). Positions 97–387 (AIVSLASIAA…VAPNTQAFAS (291 aa)) constitute an ABC transmembrane type-1 1 domain. The N-linked (GlcNAc...) asparagine glycan is linked to asparagine 293. 2 consecutive transmembrane segments (helical) span residues 325–345 (LGIM…LGFW) and 358–378 (LSAI…IGNV). Residues 422–667 (IEFRGIKHIY…KGTYLQLVEA (246 aa)) form the ABC transporter 1 domain. 457 to 464 (GPSGSGKS) contributes to the ATP binding site. N-linked (GlcNAc...) asparagine glycosylation occurs at asparagine 529. Helical transmembrane passes span 762–782 (LCGF…SVFF) and 808–828 (LMFL…GVIF). In terms of domain architecture, ABC transmembrane type-1 2 spans 764–1051 (GFFFAVLSGA…VFSFSPDMGK (288 aa)). A glycan (N-linked (GlcNAc...) asparagine) is linked at asparagine 860. The next 4 membrane-spanning stretches (helical) occupy residues 884–904 (LGTI…ALAF), 910–930 (LVCI…FWIL), 995–1015 (ASQS…GGLL), and 1025–1045 (FFLC…VFSF). The ABC transporter 2 domain maps to 1086–1324 (IEFRDVHFRY…KGRYYELVHM (239 aa)). N-linked (GlcNAc...) asparagine glycosylation is present at asparagine 1108. 1121 to 1128 (GPSGCGKS) lines the ATP pocket.

The protein belongs to the ABC transporter superfamily. ABCB family. Multidrug resistance exporter (TC 3.A.1.201) subfamily.

The protein localises to the cell membrane. The catalysed reaction is itraconazole(in) + ATP + H2O = itraconazole(out) + ADP + phosphate + H(+). Functionally, ABC-type efflux transporter involved in the modulation susceptibility to itraconazole. The protein is ABC multidrug transporter MDR2 of Trichophyton rubrum (strain ATCC MYA-4607 / CBS 118892) (Athlete's foot fungus).